A 498-amino-acid chain; its full sequence is MRINPTTSGSGVSTLEKKNPGRVVQIIGPVLDVAFPPGKMPNIYNALVVQGRDSVGQPINVACEVQQLLGNNRVRAVAMSATEGLTRGMAVIDTGAPISVPVGGATLGRIFNVLGEPVDNLGPVDTSTTSPIHRSAPAFIQLDTKLSIFETGIKVVDLLAPYRRGGKIGLFGGAGVGKTVLIMELINNIAKAHGGVSVFGGVGERTREGNDLYMEMKESGVINKENIAESKVALVYGQMNEPPGARMRVGLTALTMAEYFRDVNEQDVLLFIDNIFRFVQAGSEVSALLGRMPSAVGYQPTLSTEMGSLQERITSTKEGSITSIQAVYVPADDLTDPAPATTFAHLDATTVLSRGLAAKGIYPAVDPLDSTSTMLQPRIVGEEHYETAQRVKQTLQRYKELQDIIAILGLDELSEEDRLLVARARKIERFLSQPFFVAEVFTGSPGKYVGLAETIRGFQLILSGELDGLPEQAFYLVGTIDEATAKAMNLEMESNLKK.

Residue 172–179 (GGAGVGKT) coordinates ATP.

It belongs to the ATPase alpha/beta chains family. F-type ATPases have 2 components, CF(1) - the catalytic core - and CF(0) - the membrane proton channel. CF(1) has five subunits: alpha(3), beta(3), gamma(1), delta(1), epsilon(1). CF(0) has four main subunits: a(1), b(1), b'(1) and c(9-12).

The protein localises to the plastid. It localises to the chloroplast thylakoid membrane. The catalysed reaction is ATP + H2O + 4 H(+)(in) = ADP + phosphate + 5 H(+)(out). Functionally, produces ATP from ADP in the presence of a proton gradient across the membrane. The catalytic sites are hosted primarily by the beta subunits. The polypeptide is ATP synthase subunit beta, chloroplastic (Solanum lycopersicum (Tomato)).